The sequence spans 381 residues: L-lactate dehydrogenase (381 aa).

The FMN hydroxy acid dehydrogenase domain occupies Met-1–Lys-380. Residue Tyr-24 participates in substrate binding. The FMN site is built by Ser-106 and Gln-127. Substrate is bound at residue Tyr-129. Thr-155 lines the FMN pocket. Arg-164 contributes to the substrate binding site. Lys-251 lines the FMN pocket. Catalysis depends on His-275, which acts as the Proton acceptor. Arg-278 provides a ligand contact to substrate. Asp-306–Arg-330 provides a ligand contact to FMN.

The protein belongs to the FMN-dependent alpha-hydroxy acid dehydrogenase family. The cofactor is FMN.

It localises to the cell inner membrane. The catalysed reaction is (S)-lactate + A = pyruvate + AH2. Functionally, catalyzes the conversion of L-lactate to pyruvate. Is coupled to the respiratory chain. The sequence is that of L-lactate dehydrogenase from Actinobacillus pleuropneumoniae serotype 5b (strain L20).